Consider the following 324-residue polypeptide: 4-diphosphocytidyl-2-C-methyl-D-erythritol kinase (324 aa).

The active site involves Lys11. An ATP-binding site is contributed by 108–118 (PIGAGLAGGST). Residue Asp150 is part of the active site.

It belongs to the GHMP kinase family. IspE subfamily.

It carries out the reaction 4-CDP-2-C-methyl-D-erythritol + ATP = 4-CDP-2-C-methyl-D-erythritol 2-phosphate + ADP + H(+). It functions in the pathway isoprenoid biosynthesis; isopentenyl diphosphate biosynthesis via DXP pathway; isopentenyl diphosphate from 1-deoxy-D-xylulose 5-phosphate: step 3/6. Functionally, catalyzes the phosphorylation of the position 2 hydroxy group of 4-diphosphocytidyl-2C-methyl-D-erythritol. This chain is 4-diphosphocytidyl-2-C-methyl-D-erythritol kinase, found in Cyanothece sp. (strain PCC 7425 / ATCC 29141).